We begin with the raw amino-acid sequence, 205 residues long: Imidazoleglycerol-phosphate dehydratase (205 aa).

It belongs to the imidazoleglycerol-phosphate dehydratase family.

Its subcellular location is the cytoplasm. The enzyme catalyses D-erythro-1-(imidazol-4-yl)glycerol 3-phosphate = 3-(imidazol-4-yl)-2-oxopropyl phosphate + H2O. It functions in the pathway amino-acid biosynthesis; L-histidine biosynthesis; L-histidine from 5-phospho-alpha-D-ribose 1-diphosphate: step 6/9. This is Imidazoleglycerol-phosphate dehydratase from Chloroflexus aurantiacus (strain ATCC 29366 / DSM 635 / J-10-fl).